We begin with the raw amino-acid sequence, 160 residues long: Protein cornichon homolog 2 (160 aa).

Residues 1-10 are Cytoplasmic-facing; it reads MAFTFAAFCY. A helical transmembrane segment spans residues 11 to 31; that stretch reads MLTLVLCASLIFFVIWHIIAF. Over 32–72 the chain is Lumenal; it reads DELRTDFKNPIDQGNPARARERLKNIERICCLLRKLVVPEY. A helical transmembrane segment spans residues 73-93; it reads CIHGLFCLMFLCAAEWVTLGL. The Cytoplasmic portion of the chain corresponds to 94-138; that stretch reads NLPLLLYHLWRYFHRPSDGSEGLFDAVSIMDADILGYCQKEAWCK. Residues 139–159 traverse the membrane as a helical segment; the sequence is LAFYLLSFFYYLYSMVYTLVS. A topological domain (lumenal) is located at residue Phe160.

The protein belongs to the cornichon family. In terms of assembly, interacts with HBEGF. In terms of tissue distribution, expressed in the odd-numbered neuromeres (r3 and r5) of the developing hindbrain.

It localises to the membrane. Its function is as follows. Regulates the trafficking and gating properties of AMPA-selective glutamate receptors (AMPARs). Plays an important role in the proper development of cranial nerves by facilitating the secretion of HBEGF. The sequence is that of Protein cornichon homolog 2 (CNIH2) from Gallus gallus (Chicken).